A 248-amino-acid polypeptide reads, in one-letter code: Pyridoxine 5'-phosphate synthase (248 aa).

N12 lines the 3-amino-2-oxopropyl phosphate pocket. 14 to 15 (DH) is a 1-deoxy-D-xylulose 5-phosphate binding site. 3-amino-2-oxopropyl phosphate is bound at residue R23. The Proton acceptor role is filled by H48. R50 and H55 together coordinate 1-deoxy-D-xylulose 5-phosphate. E75 serves as the catalytic Proton acceptor. A 1-deoxy-D-xylulose 5-phosphate-binding site is contributed by T105. H196 functions as the Proton donor in the catalytic mechanism. 3-amino-2-oxopropyl phosphate contacts are provided by residues G197 and 218 to 219 (GH).

The protein belongs to the PNP synthase family. As to quaternary structure, homooctamer; tetramer of dimers.

The protein localises to the cytoplasm. The enzyme catalyses 3-amino-2-oxopropyl phosphate + 1-deoxy-D-xylulose 5-phosphate = pyridoxine 5'-phosphate + phosphate + 2 H2O + H(+). It functions in the pathway cofactor biosynthesis; pyridoxine 5'-phosphate biosynthesis; pyridoxine 5'-phosphate from D-erythrose 4-phosphate: step 5/5. Catalyzes the complicated ring closure reaction between the two acyclic compounds 1-deoxy-D-xylulose-5-phosphate (DXP) and 3-amino-2-oxopropyl phosphate (1-amino-acetone-3-phosphate or AAP) to form pyridoxine 5'-phosphate (PNP) and inorganic phosphate. The sequence is that of Pyridoxine 5'-phosphate synthase from Azotobacter vinelandii (strain DJ / ATCC BAA-1303).